The following is a 451-amino-acid chain: Proton-coupled amino acid transporter-like protein acs (451 aa).

Residues methionine 1 to threonine 48 lie on the Cytoplasmic side of the membrane. A helical transmembrane segment spans residues phenylalanine 49 to alanine 69. At histidine 70–threonine 80 the chain is on the extracellular side. The N-linked (GlcNAc...) asparagine glycan is linked to asparagine 75. A helical transmembrane segment spans residues leucine 81–leucine 101. Residues cysteine 102–proline 136 lie on the Cytoplasmic side of the membrane. A helical transmembrane segment spans residues phenylalanine 137–isoleucine 157. The Extracellular segment spans residues alanine 158 to glutamate 167. The chain crosses the membrane as a helical span at residues tyrosine 168–isoleucine 188. Residues tyrosine 189–proline 199 are Cytoplasmic-facing. Residues phenylalanine 200–phenylalanine 220 traverse the membrane as a helical segment. At glutamate 221–lysine 237 the chain is on the extracellular side. A helical membrane pass occupies residues leucine 238–isoleucine 258. Residues glutamate 259–cysteine 272 are Cytoplasmic-facing. A helical membrane pass occupies residues glycine 273–glycine 293. Residues tyrosine 294 to lysine 320 are Extracellular-facing. Asparagine 299 carries an N-linked (GlcNAc...) asparagine glycan. Residues valine 321–isoleucine 341 form a helical membrane-spanning segment. Residues leucine 342–threonine 357 are Cytoplasmic-facing. The chain crosses the membrane as a helical span at residues phenylalanine 358–isoleucine 378. The Extracellular portion of the chain corresponds to proline 379 to serine 382. Residues valine 383 to leucine 403 form a helical membrane-spanning segment. The Cytoplasmic segment spans residues leucine 404–lysine 420. A helical membrane pass occupies residues leucine 421–valine 441. The Extracellular portion of the chain corresponds to serine 442 to lysine 451.

It belongs to the amino acid/polyamine transporter 2 family. In terms of tissue distribution, expressed in the proximal and distal regions of the midgut; expressed in enterocytes and progenitor cells. Expression increases in response to intestinal bacterial infection and spreads further into the midgut, eventually covering the entire midgut.

Its subcellular location is the cell membrane. It is found in the late endosome membrane. The protein localises to the lysosome membrane. The protein resides in the basal cell membrane. Its function is as follows. Amino acid transporter which has pH-dependent electrogenic transport activity for alanine, glycine and proline. Plays a role in positive regulation of growth by directly or indirectly modulating the effects of the TOR signaling pathway. Required in enterocytes for the efficient recovery of gut epithelium following the cytoplasmic purge response to bacterial infection. Acts cell-autonomously to promote the retrograde transport of amino acids into the intestinal epithelium. Acts non-cell-autonomously through the insulin signaling pathway to stimulate Myc expression and the release of amino acids from nutrient stores into the hemolymph. In Drosophila melanogaster (Fruit fly), this protein is Proton-coupled amino acid transporter-like protein acs.